Consider the following 350-residue polypeptide: Serine/arginine-rich splicing factor RS40 (350 aa).

RRM domains are found at residues 2 to 74 (KPVF…WTKS) and 97 to 168 (KTLF…YAVK). Composition is skewed to basic and acidic residues over residues 73–82 (KSERGGDKRS) and 167–187 (VKDDDARGNGHSPERRRDRSP). Disordered regions lie at residues 73-94 (KSERGGDKRSGGGSRRSSSSMR) and 167-350 (VKDD…PADE). A phosphoserine mark is found at Ser193, Ser195, and Ser211. Composition is skewed to basic and acidic residues over residues 216-227 (YRKERTSPDYGR) and 240-255 (GSPEYGRDRRGNDSPR). Phosphoserine occurs at positions 241, 262, 278, 298, 308, 335, and 340. Residues 272–289 (NKRERMSPNHSPFKKESP) are compositionally biased toward basic and acidic residues. Residues 299 to 308 (PIERRERSRS) show a composition bias toward basic and acidic residues.

This sequence belongs to the splicing factor SR family. RS subfamily. Component of the spliceosome. Interacts with SNRNP35. Interacts with CYP59. Interacts with RCF3 and CPL1. Interacts with DRB1/HYL1 and SE. In terms of tissue distribution, highly expressed in roots and flowers. A presumably longer alternatively spliced form is found in leaves, stems and flowers.

It localises to the nucleus. The protein resides in the nucleus speckle. In terms of biological role, required for constitutive and alternative pre-mRNA splicing. Involved in primary miRNA processing and pri-miRNA biogenesis. Binds both intronless and intron-containing pri-miRNAs. This is Serine/arginine-rich splicing factor RS40 (RS40) from Arabidopsis thaliana (Mouse-ear cress).